A 301-amino-acid chain; its full sequence is MTEGVLINENEVESKLEAVIKPGSFTGENAGEMAEVILIPKKAIDIKLEADVITPDSFAGKSAEEIGKLSVWQGPKTYPLSEFFEVTGNGGSSAAETLIRIKGDAMRIKRIGESMSAGKIEIEGSAGMHVGTGMKGGELVVYGDADSWAGMEMTGGLLHIKGNAGDHVGCAYRGKWHGMKGGRIVIEGSARHQLGGGMDGGEILVEGDVKSFCGIRQNGGLIFVKGSALRGVGAEMAGGTIVIGGKIERFSPGFEFVSMENSITSGEVELIGEFKKFTGDYAISKRAKGALYVVADTNPEL.

A run of 7 repeats spans residues 112-124, 131-143, 150-162, 176-188, 195-207, 214-226, and 233-245. Positions 112–245 are 7 X 13 AA repeats of [GW]-X-X-[MQ]-X-X-G-X-[IL]-X-[IV]-X-G; that stretch reads GESMSAGKIE…MAGGTIVIGG (134 aa).

It belongs to the FwdC/FmdC family. In terms of assembly, this enzyme is composed of six subunits; FmdA (65 kDa), FmdB (50 kDa), FmdC (34 kDa), FmdD (17 kDa), FmdE (23 kDa) and FmdF (37 kDa).

The catalysed reaction is N-formylmethanofuran + 2 oxidized [2Fe-2S]-[ferredoxin] + H2O = methanofuran + 2 reduced [2Fe-2S]-[ferredoxin] + CO2 + H(+). The protein operates within one-carbon metabolism; methanogenesis from CO(2); 5,10-methenyl-5,6,7,8-tetrahydromethanopterin from CO(2): step 1/3. With respect to regulation, inactivated by cyanide. Catalyzes the reversible oxidation of CO(2) and methanofuran (MFR) to N-formylmethanofuran (CHO-MFR). Can use N-furfurylformamide, formamide, N-methylformamide, and formate as substrates. This enzyme is oxygen-labile. The sequence is that of Molybdenum-containing formylmethanofuran dehydrogenase 1 subunit C (fmdC) from Methanosarcina barkeri (strain Fusaro / DSM 804).